A 150-amino-acid polypeptide reads, in one-letter code: Large ribosomal subunit protein uL15 (150 aa).

This sequence belongs to the universal ribosomal protein uL15 family. As to quaternary structure, part of the 50S ribosomal subunit.

In terms of biological role, binds to the 23S rRNA. This is Large ribosomal subunit protein uL15 from Rickettsia prowazekii (strain Madrid E).